The sequence spans 155 residues: Secreted RxLR effector protein 38 (155 aa).

The first 17 residues, 1-17 (MHLIYIVMAATATTLHA), serve as a signal peptide directing secretion. Positions 49–64 (RFLRGAYEDVHREEER) match the RxLR-dEER motif.

Belongs to the RxLR effector family.

It localises to the secreted. Its subcellular location is the host nucleus. The protein localises to the host cytoplasm. Functionally, secreted effector that completely suppresses the host cell death induced by cell death-inducing proteins. The sequence is that of Secreted RxLR effector protein 38 from Plasmopara viticola (Downy mildew of grapevine).